Reading from the N-terminus, the 691-residue chain is Alpha-1,4-glucan:maltose-1-phosphate maltosyltransferase (691 aa).

The alpha-maltose 1-phosphate site is built by Lys-280, Gln-341, and Asp-376. The active-site Nucleophile is the Asp-411. Residue Asn-412 coordinates alpha-maltose 1-phosphate. Glu-440 (proton donor) is an active-site residue. Alpha-maltose 1-phosphate is bound at residue 550 to 551 (KY).

It belongs to the glycosyl hydrolase 13 family. GlgE subfamily. In terms of assembly, homodimer.

It carries out the reaction alpha-maltose 1-phosphate + [(1-&gt;4)-alpha-D-glucosyl](n) = [(1-&gt;4)-alpha-D-glucosyl](n+2) + phosphate. Maltosyltransferase that uses maltose 1-phosphate (M1P) as the sugar donor to elongate linear or branched alpha-(1-&gt;4)-glucans. Is involved in a branched alpha-glucan biosynthetic pathway from trehalose, together with TreS, Mak and GlgB. The sequence is that of Alpha-1,4-glucan:maltose-1-phosphate maltosyltransferase from Arcanobacterium haemolyticum (strain ATCC 9345 / DSM 20595 / CCM 5947 / CCUG 17215 / LMG 16163 / NBRC 15585 / NCTC 8452 / 11018).